The sequence spans 256 residues: MLLRTASSFSLLKANADHILPLPNSSSSGIIRYSQSLGKNLVPCATKDTNNRPLTGVVFEPFEEVKKELDLVPTVPQASLARQKYTDDCEATINEQINVEYNVSYVYHAMFAYFDRDNVALKGLAKFFKESSEEEREHAEKLMEYQNKRGGKVKLQSIVMPLSEFDHEEKGDALYAMELALSLEKLTNEKLLNLHSVASKNNDVQLADFIESEFLGEQVEAIKKISEYVAQLRRVGKGHGVWHFDQMLLHEEGVAA.

The transit peptide at Met-1 to Thr-49 directs the protein to the chloroplast. Positions Asn-50 to Arg-82 are extension peptide (EP). A Ferritin-like diiron domain is found at Gln-83–Gly-236. 5 residues coordinate Fe cation: Glu-100, Glu-135, His-138, Glu-184, and Gln-218.

This sequence belongs to the ferritin family. Oligomer of 24 subunits. There are two types of subunits: L (light) chain and H (heavy) chain. The major chain can be light or heavy, depending on the species and tissue type. The functional molecule forms a roughly spherical shell with a diameter of 12 nm and contains a central cavity into which the insoluble mineral iron core is deposited.

It is found in the plastid. The protein resides in the chloroplast. The catalysed reaction is 4 Fe(2+) + O2 + 4 H(+) = 4 Fe(3+) + 2 H2O. In terms of biological role, stores iron in a soluble, non-toxic, readily available form. Important for iron homeostasis. Has ferroxidase activity. Iron is taken up in the ferrous form and deposited as ferric hydroxides after oxidation. The polypeptide is Ferritin-3, chloroplastic (Glycine max (Soybean)).